The primary structure comprises 825 residues: Actin filament-associated protein 1-like 2 (825 aa).

Tyr-56 is modified (phosphotyrosine). Residues 62–163 (VNGEQNSASP…SKGKAAPYQW (102 aa)) are disordered. Residues 80–94 (PLTNGEPSQHSSAPQ) show a composition bias toward polar residues. Thr-113 is subject to Phosphothreonine. PH domains follow at residues 175-271 (DARI…EVSG) and 353-447 (SLET…SESG). At Ser-408 the chain carries Phosphoserine. Residue Tyr-413 is modified to Phosphotyrosine. A Phosphoserine modification is found at Ser-484. Positions 571–614 (TLTVDPKPGTTPEEPHTESPGDPEVQQRQPEVQESSEPIEPTPR) are disordered. The segment covering 593-608 (PEVQQRQPEVQESSEP) has biased composition (low complexity). The stretch at 657–754 (AEIKLGKNRT…VKDNLKKAEA (98 aa)) forms a coiled coil. The interval 757–801 (VTLGTTVDTTHLDNMSPRPQPKAATPNPPPDSTPVNSASVLKNRP) is disordered. A compositionally biased stretch (polar residues) spans 759–769 (LGTTVDTTHLD).

In terms of assembly, interacts with SRC. Interacts with LCK when tyrosine phosphorylated. Tyrosine phosphorylated (by SRC).

The protein localises to the cytoplasm. Its function is as follows. May play a role in a signaling cascade by enhancing the kinase activity of SRC. Contributes to SRC-regulated transcription activation. The sequence is that of Actin filament-associated protein 1-like 2 (Afap1l2) from Mus musculus (Mouse).